Here is a 207-residue protein sequence, read N- to C-terminus: Outer-membrane lipoprotein LolB (207 aa).

An N-terminal signal peptide occupies residues 1 to 23 (MPTMNRSRRLALLCLGAPLLLAA). C24 carries the N-palmitoyl cysteine lipid modification. C24 carries S-diacylglycerol cysteine lipidation. The interval 171–207 (PSASQAPAPRPRRIDLEREGGPTPLAVKLVIDPEEAP) is disordered.

Belongs to the LolB family. As to quaternary structure, monomer.

Its subcellular location is the cell outer membrane. Plays a critical role in the incorporation of lipoproteins in the outer membrane after they are released by the LolA protein. This chain is Outer-membrane lipoprotein LolB, found in Cupriavidus pinatubonensis (strain JMP 134 / LMG 1197) (Cupriavidus necator (strain JMP 134)).